A 166-amino-acid chain; its full sequence is 6,7-dimethyl-8-ribityllumazine synthase (166 aa).

5-amino-6-(D-ribitylamino)uracil contacts are provided by residues Phe-24, 58–60 (ALE), and 82–84 (AVI). 87–88 (ET) contributes to the (2S)-2-hydroxy-3-oxobutyl phosphate binding site. His-90 serves as the catalytic Proton donor. 5-amino-6-(D-ribitylamino)uracil is bound at residue Asn-115. Arg-129 provides a ligand contact to (2S)-2-hydroxy-3-oxobutyl phosphate.

Belongs to the DMRL synthase family.

It carries out the reaction (2S)-2-hydroxy-3-oxobutyl phosphate + 5-amino-6-(D-ribitylamino)uracil = 6,7-dimethyl-8-(1-D-ribityl)lumazine + phosphate + 2 H2O + H(+). It functions in the pathway cofactor biosynthesis; riboflavin biosynthesis; riboflavin from 2-hydroxy-3-oxobutyl phosphate and 5-amino-6-(D-ribitylamino)uracil: step 1/2. Its function is as follows. Catalyzes the formation of 6,7-dimethyl-8-ribityllumazine by condensation of 5-amino-6-(D-ribitylamino)uracil with 3,4-dihydroxy-2-butanone 4-phosphate. This is the penultimate step in the biosynthesis of riboflavin. The polypeptide is 6,7-dimethyl-8-ribityllumazine synthase (Ralstonia pickettii (strain 12J)).